We begin with the raw amino-acid sequence, 330 residues long: Phenylalanine--tRNA ligase alpha subunit (330 aa).

A Mg(2+)-binding site is contributed by Glu255.

Belongs to the class-II aminoacyl-tRNA synthetase family. Phe-tRNA synthetase alpha subunit type 1 subfamily. In terms of assembly, tetramer of two alpha and two beta subunits. Requires Mg(2+) as cofactor.

It is found in the cytoplasm. It carries out the reaction tRNA(Phe) + L-phenylalanine + ATP = L-phenylalanyl-tRNA(Phe) + AMP + diphosphate + H(+). The protein is Phenylalanine--tRNA ligase alpha subunit of Acinetobacter baumannii (strain AYE).